We begin with the raw amino-acid sequence, 215 residues long: Fibroblast growth factor 17 (215 aa).

The first 22 residues, M1–A22, serve as a signal peptide directing secretion. Residue N137 is glycosylated (N-linked (GlcNAc...) asparagine).

This sequence belongs to the heparin-binding growth factors family.

Its subcellular location is the secreted. Involved in dorsal-ventral embryonic patterning, by promoting expression of bone morphogenetic protein (BMP) antagonists such as chd. Also involved in anterior-posterior neural patterning and in mesoderm induction. The protein is Fibroblast growth factor 17 (fgf17) of Danio rerio (Zebrafish).